A 936-amino-acid polypeptide reads, in one-letter code: Protein NNF2 (936 aa).

The Lumenal segment spans residues 1 to 41 (MEEQFTNQKKVSHLQSLMNTKRSEQPTEFAKKHRFKDTLAL). A Glycyl lysine isopeptide (Lys-Gly) (interchain with G-Cter in ubiquitin) cross-link involves residue Lys10. The chain crosses the membrane as a helical span at residues 42 to 62 (FLVFLSFNHFTSLCLLVSFIV). At 63 to 120 (ATKCKDFLANCFIILFLSKKPSRHIGEVAHIDISTSKVTNGSSNRKSNSRFFGNSKNS) the chain is on the cytoplasmic side. The helical transmembrane segment at 121–141 (FVIPIPVLICEILFAMLLKIY) threads the bilayer. The Lumenal portion of the chain corresponds to 142 to 245 (GGDYFVKPIK…FKMLGKHSDS (104 aa)). Residues 246–266 (MIYYLSFHILFFSFASSLLHP) traverse the membrane as a helical segment. Topologically, residues 267 to 936 (HRQTAENKPL…NIHSLIGNSY (670 aa)) are cytoplasmic. Disordered stretches follow at residues 297 to 351 (RISS…SNIL), 387 to 437 (GSNS…DFFS), and 512 to 533 (TSEN…QEKH). The segment covering 299–308 (SSSSSVSADS) has biased composition (low complexity). Over residues 325-351 (LSSSNQTIHPSQQNNSPVPLSSHSNIL) the composition is skewed to polar residues. 2 stretches are compositionally biased toward low complexity: residues 394-405 (TTTTSTTTSPTT) and 414-428 (SLSN…SNGN). A compositionally biased stretch (polar residues) spans 512 to 529 (TSENSLTPTNSNTSYVSN).

Its subcellular location is the endoplasmic reticulum membrane. This Saccharomyces cerevisiae (strain ATCC 204508 / S288c) (Baker's yeast) protein is Protein NNF2 (NNF2).